The chain runs to 342 residues: UDP-N-acetylglucosamine--N-acetylmuramyl-(pentapeptide) pyrophosphoryl-undecaprenol N-acetylglucosamine transferase (342 aa).

Residues 10–12 (TGG), N124, S177, and Q275 contribute to the UDP-N-acetyl-alpha-D-glucosamine site.

Belongs to the glycosyltransferase 28 family. MurG subfamily.

Its subcellular location is the cell inner membrane. The enzyme catalyses di-trans,octa-cis-undecaprenyl diphospho-N-acetyl-alpha-D-muramoyl-L-alanyl-D-glutamyl-meso-2,6-diaminopimeloyl-D-alanyl-D-alanine + UDP-N-acetyl-alpha-D-glucosamine = di-trans,octa-cis-undecaprenyl diphospho-[N-acetyl-alpha-D-glucosaminyl-(1-&gt;4)]-N-acetyl-alpha-D-muramoyl-L-alanyl-D-glutamyl-meso-2,6-diaminopimeloyl-D-alanyl-D-alanine + UDP + H(+). It participates in cell wall biogenesis; peptidoglycan biosynthesis. Cell wall formation. Catalyzes the transfer of a GlcNAc subunit on undecaprenyl-pyrophosphoryl-MurNAc-pentapeptide (lipid intermediate I) to form undecaprenyl-pyrophosphoryl-MurNAc-(pentapeptide)GlcNAc (lipid intermediate II). The sequence is that of UDP-N-acetylglucosamine--N-acetylmuramyl-(pentapeptide) pyrophosphoryl-undecaprenol N-acetylglucosamine transferase from Campylobacter jejuni (strain RM1221).